A 203-amino-acid chain; its full sequence is Urease accessory protein UreG (203 aa).

14 to 21 is a binding site for GTP; sequence GPVGSGKT.

This sequence belongs to the SIMIBI class G3E GTPase family. UreG subfamily. As to quaternary structure, homodimer. UreD, UreF and UreG form a complex that acts as a GTP-hydrolysis-dependent molecular chaperone, activating the urease apoprotein by helping to assemble the nickel containing metallocenter of UreC. The UreE protein probably delivers the nickel.

The protein localises to the cytoplasm. In terms of biological role, facilitates the functional incorporation of the urease nickel metallocenter. This process requires GTP hydrolysis, probably effectuated by UreG. This chain is Urease accessory protein UreG, found in Rhizobium rhizogenes (strain K84 / ATCC BAA-868) (Agrobacterium radiobacter).